The chain runs to 436 residues: Acetyl-CoA decarbonylase/synthase complex subunit delta (436 aa).

This sequence belongs to the CdhD family. In terms of assembly, heterodimer of delta and gamma chains. The ACDS complex is made up of alpha, epsilon, beta, gamma and delta chains with a probable stoichiometry of (alpha(2)epsilon(2))(4)-beta(8)-(gamma(1)delta(1))(8).

The protein operates within one-carbon metabolism; methanogenesis from acetate. Part of a complex that catalyzes the reversible cleavage of acetyl-CoA, allowing growth on acetate as sole source of carbon and energy. Probably maintains the overall quaternary structure of the ACDS complex. In Methanosarcina mazei (strain ATCC BAA-159 / DSM 3647 / Goe1 / Go1 / JCM 11833 / OCM 88) (Methanosarcina frisia), this protein is Acetyl-CoA decarbonylase/synthase complex subunit delta.